The following is a 587-amino-acid chain: Vesicular glutamate transporter 2.2 (587 aa).

The Cytoplasmic portion of the chain corresponds to Met1–Tyr71. Residues Ile72 to Gly92 traverse the membrane as a helical segment. The Vesicular portion of the chain corresponds to Val93–Val125. Asn100 and Asn101 each carry an N-linked (GlcNAc...) asparagine glycan. A helical transmembrane segment spans residues Gly126 to Ile146. Residues Ser147–Arg149 lie on the Cytoplasmic side of the membrane. A helical membrane pass occupies residues Leu150 to Ile170. The Vesicular portion of the chain corresponds to Pro171–Cys180. A helical transmembrane segment spans residues Val181–Trp203. At Ser204–Thr217 the chain is on the cytoplasmic side. The chain crosses the membrane as a helical span at residues Thr218–Val238. At Gln239 to Ser245 the chain is on the vesicular side. Residues Val246 to Tyr266 traverse the membrane as a helical segment. The Cytoplasmic segment spans residues Glu267 to Met311. Residues Pro312–Ile332 form a helical membrane-spanning segment. Residues Ser333–Gly350 lie on the Vesicular side of the membrane. The chain crosses the membrane as a helical span at residues Met351 to Ala371. Residues Asp372–Lys387 are Cytoplasmic-facing. A helical transmembrane segment spans residues Ile388–His408. Residues Ser409 to Lys410 are Vesicular-facing. A helical membrane pass occupies residues Gly411–Phe431. The Cytoplasmic portion of the chain corresponds to Asn432–Ser444. Residues Ile445–Val465 form a helical membrane-spanning segment. The Vesicular segment spans residues Gly466–Asn479. N-linked (GlcNAc...) asparagine glycosylation is present at Asn471. A helical transmembrane segment spans residues Val480–Ser500. Residues Gly501 to Ser587 lie on the Cytoplasmic side of the membrane.

The protein belongs to the major facilitator superfamily. Sodium/anion cotransporter family. VGLUT subfamily. In terms of tissue distribution, expressed in spinal cord.

It is found in the cytoplasmic vesicle. Its subcellular location is the secretory vesicle. It localises to the synaptic vesicle membrane. The protein localises to the membrane. The protein resides in the synapse. It is found in the synaptosome. Its subcellular location is the cell membrane. It catalyses the reaction L-glutamate(out) = L-glutamate(in). The enzyme catalyses 3 Na(+)(out) + phosphate(out) = 3 Na(+)(in) + phosphate(in). The catalysed reaction is phosphate(in) = phosphate(out). It carries out the reaction K(+)(in) + H(+)(out) = K(+)(out) + H(+)(in). It catalyses the reaction chloride(in) = chloride(out). Chloride channel activity is allosterically activated by lumenal H(+) and Cl(-) leading to synaptic vesicles acidification. The L-glutamate transport activity is allosterically activated by lumenal H(+) and Cl(-). The allosteric requirement for H(+) efficiently prevents non-vesicular efflux across the plasma membrane. The L-glutamate uniporter activity exhibits a biphasic dependence on chloride concentration. Multifunctional transporter that transports L-glutamate as well as multiple ions such as chloride, proton, potassium, sodium and phosphate. At the synaptic vesicle membrane, mainly functions as a uniporter which transports preferentially L-glutamate but also, phosphate from the cytoplasm into synaptic vesicles at presynaptic nerve terminals of excitatory neural cells. The L-glutamate or phosphate uniporter activity is electrogenic and is driven by the proton electrochemical gradient, mainly by the electrical gradient established by the vacuolar H(+)-ATPase across the synaptic vesicle membrane. In addition, functions as a chloride channel that allows a chloride permeation through the synaptic vesicle membrane therefore affects the proton electrochemical gradient and promotes synaptic vesicles acidification. Moreover, functions as a vesicular K(+)/H(+) antiport allowing to maintain the electrical gradient and to decrease chemical gradient and therefore sustain vesicular L-glutamate uptake. The vesicular H(+)/H(+) antiport activity is electroneutral. At the plasma membrane, following exocytosis, functions as a symporter of Na(+) and phosphate from the extracellular space to the cytoplasm allowing synaptic phosphate homeostasis regulation. The symporter activity is driven by an inside negative membrane potential and is electrogenic. Also involved in the regulation of retinal hyaloid vessel regression during postnatal development. May also play a role in the endocrine L-glutamatergic system of other tissues such as pineal gland and pancreas. This chain is Vesicular glutamate transporter 2.2 (slc17a6a), found in Danio rerio (Zebrafish).